A 265-amino-acid polypeptide reads, in one-letter code: Tryptophan synthase alpha chain (265 aa).

Active-site proton acceptor residues include Glu-49 and Asp-60.

It belongs to the TrpA family. As to quaternary structure, tetramer of two alpha and two beta chains.

It catalyses the reaction (1S,2R)-1-C-(indol-3-yl)glycerol 3-phosphate + L-serine = D-glyceraldehyde 3-phosphate + L-tryptophan + H2O. Its pathway is amino-acid biosynthesis; L-tryptophan biosynthesis; L-tryptophan from chorismate: step 5/5. In terms of biological role, the alpha subunit is responsible for the aldol cleavage of indoleglycerol phosphate to indole and glyceraldehyde 3-phosphate. The polypeptide is Tryptophan synthase alpha chain (Desulfosudis oleivorans (strain DSM 6200 / JCM 39069 / Hxd3) (Desulfococcus oleovorans)).